Here is a 67-residue protein sequence, read N- to C-terminus: uncharacterized protein (67 aa).

This is an uncharacterized protein from Dictyostelium discoideum (Social amoeba).